The primary structure comprises 505 residues: Flagellin (505 aa).

Belongs to the bacterial flagellin family.

It is found in the secreted. Its subcellular location is the bacterial flagellum. Flagellin is the subunit protein which polymerizes to form the filaments of bacterial flagella. The chain is Flagellin (fliC) from Salmonella budapest.